The following is a 670-amino-acid chain: DNA ligase (670 aa).

Residues 34–38, 83–84, and E117 contribute to the NAD(+) site; these read DAEYD and SL. Catalysis depends on K119, which acts as the N6-AMP-lysine intermediate. 4 residues coordinate NAD(+): R140, E177, K293, and K317. Positions 411, 414, 429, and 434 each coordinate Zn(2+). The BRCT domain maps to 591 to 670; the sequence is KVGGRFTGKT…DEFLAMLEEG (80 aa).

Belongs to the NAD-dependent DNA ligase family. LigA subfamily. Requires Mg(2+) as cofactor. Mn(2+) is required as a cofactor.

It carries out the reaction NAD(+) + (deoxyribonucleotide)n-3'-hydroxyl + 5'-phospho-(deoxyribonucleotide)m = (deoxyribonucleotide)n+m + AMP + beta-nicotinamide D-nucleotide.. Functionally, DNA ligase that catalyzes the formation of phosphodiester linkages between 5'-phosphoryl and 3'-hydroxyl groups in double-stranded DNA using NAD as a coenzyme and as the energy source for the reaction. It is essential for DNA replication and repair of damaged DNA. This Geobacter sulfurreducens (strain ATCC 51573 / DSM 12127 / PCA) protein is DNA ligase.